The sequence spans 2073 residues: Fatty acid synthase subunit beta (2073 aa).

The interval 1–459 (MVEAEQVHQS…VYSTDDAGDL (459 aa)) is acetyltransferase. S270 acts as the For acetyltransferase activity in catalysis. Positions 470-858 (ALAVMITEKV…TRGIMFWKEL (389 aa)) are enoyl reductase. S1122 bears the Phosphoserine mark. The segment at 1155–1644 (GPEYTWFRAI…LPNTELITKL (490 aa)) is dehydratase. H1361 functions as the For dehydratase activity in the catalytic mechanism. Residues 1558–1667 (PVFVTPPTNS…VEVLNQETSE (110 aa)) form the MaoC-like domain. The interval 1645–2073 (SHTGMINGRK…LQNWDEYESS (429 aa)) is malonyl/palmitoyl transferase. Residue S1828 is the For malonyltransferase activity of the active site. Residue S2073 is modified to Phosphoserine.

It belongs to the fungal fatty acid synthetase subunit beta family. In terms of assembly, [Alpha(6)beta(6)] hexamers of two multifunctional subunits (alpha and beta).

The enzyme catalyses acetyl-CoA + n malonyl-CoA + 2n NADPH + 4n H(+) = a long-chain-acyl-CoA + n CoA + n CO2 + 2n NADP(+).. The catalysed reaction is holo-[ACP] + acetyl-CoA = acetyl-[ACP] + CoA. It catalyses the reaction holo-[ACP] + malonyl-CoA = malonyl-[ACP] + CoA. It carries out the reaction a (3R)-hydroxyacyl-[ACP] = a (2E)-enoyl-[ACP] + H2O. The enzyme catalyses a 2,3-saturated acyl-[ACP] + NAD(+) = a (2E)-enoyl-[ACP] + NADH + H(+). The catalysed reaction is (9Z)-octadecenoyl-[ACP] + H2O = (9Z)-octadecenoate + holo-[ACP] + H(+). Fatty acid synthetase catalyzes the formation of long-chain fatty acids from acetyl-CoA, malonyl-CoA and NADPH. The beta subunit contains domains for: [acyl-carrier-protein] acetyltransferase and malonyltransferase, S-acyl fatty acid synthase thioesterase, enoyl-[acyl-carrier-protein] reductase, and 3-hydroxypalmitoyl-[acyl-carrier-protein] dehydratase. This is Fatty acid synthase subunit beta (fas1) from Schizosaccharomyces pombe (strain 972 / ATCC 24843) (Fission yeast).